We begin with the raw amino-acid sequence, 1152 residues long: ATP-dependent helicase/deoxyribonuclease subunit B (1152 aa).

A UvrD-like helicase ATP-binding domain is found at Met-1–Arg-338. Position 8–15 (Gly-8–Ser-15) interacts with ATP. The UvrD-like helicase C-terminal domain maps to Pro-276 to Gly-579. [4Fe-4S] cluster contacts are provided by Cys-785, Cys-1106, Cys-1109, and Cys-1115.

Belongs to the helicase family. AddB/RexB type 1 subfamily. In terms of assembly, heterodimer of AddA and AddB. It depends on Mg(2+) as a cofactor. [4Fe-4S] cluster is required as a cofactor.

The heterodimer acts as both an ATP-dependent DNA helicase and an ATP-dependent, dual-direction single-stranded exonuclease. Recognizes the chi site generating a DNA molecule suitable for the initiation of homologous recombination. The AddB subunit has 5' -&gt; 3' nuclease activity but not helicase activity. The polypeptide is ATP-dependent helicase/deoxyribonuclease subunit B (Clostridium botulinum (strain Alaska E43 / Type E3)).